The chain runs to 272 residues: Granaticin polyketide synthase putative ketoacyl reductase 1 (272 aa).

21 to 45 contacts NAD(+); it reads LVTGATSGIGLAIARRLAALGARTF. Ser-155 lines the substrate pocket. Catalysis depends on Tyr-168, which acts as the Proton acceptor.

The protein belongs to the short-chain dehydrogenases/reductases (SDR) family.

It functions in the pathway antibiotic biosynthesis; granaticin biosynthesis. This is Granaticin polyketide synthase putative ketoacyl reductase 1 (gra-orf5) from Streptomyces violaceoruber.